A 200-amino-acid chain; its full sequence is Casparian strip membrane protein 2 (200 aa).

Topologically, residues 1–37 (MMKSDSVAIDVPESSSVAKRKAPFMANIRDENGGYKK) are cytoplasmic. The helical transmembrane segment at 38 to 58 (GLAIFDFILRLGAIAAALGAA) threads the bilayer. Residues 59–88 (STMGTSDETLPFFTQFFQFNAGYDDFPTFQ) lie on the Extracellular side of the membrane. A helical membrane pass occupies residues 89 to 109 (FFVIAMAMVAGYLVLSLPFSI). Topologically, residues 110–121 (VSICRPHAAGPR) are cytoplasmic. The helical transmembrane segment at 122 to 142 (ILLFILDTVALTLNAAAGAAA) threads the bilayer. Over 143–175 (ADIVYLAHNGNQTTNWLAICLQFGDFCREVSGS) the chain is Extracellular. N-linked (GlcNAc...) asparagine glycosylation is present at Asn153. A helical membrane pass occupies residues 176–196 (VVASFASVVILMVLVVMSGLA). Residues 197-200 (LRRY) are Cytoplasmic-facing.

The protein belongs to the Casparian strip membrane proteins (CASP) family. Homodimer and heterodimers.

The protein localises to the cell membrane. Regulates membrane-cell wall junctions and localized cell wall deposition. Required for establishment of the Casparian strip membrane domain (CSD) and the subsequent formation of Casparian strips, a cell wall modification of the root endodermis that determines an apoplastic barrier between the intraorganismal apoplasm and the extraorganismal apoplasm and prevents lateral diffusion. The protein is Casparian strip membrane protein 2 of Ricinus communis (Castor bean).